Reading from the N-terminus, the 141-residue chain is Small ribosomal subunit protein bS18c (141 aa).

Disordered stretches follow at residues 14 to 55 (EFIA…IKPG) and 120 to 141 (IKRR…RPKK). Pro residues predominate over residues 24-34 (PKAPLQPPLPP). Positions 35-51 (SKRKGKPPKSPRRRSSR) are enriched in basic residues.

The protein belongs to the bacterial ribosomal protein bS18 family. In terms of assembly, part of the 30S ribosomal subunit.

It is found in the plastid. The protein resides in the chloroplast. This Pelargonium hortorum (Common geranium) protein is Small ribosomal subunit protein bS18c.